Consider the following 635-residue polypeptide: Peptidyl-prolyl cis-trans isomerase PASTICCINO1 (635 aa).

The span at 1–10 (MAVGDQTEQN) shows a compositional bias: polar residues. Positions 1–28 (MAVGDQTEQNYLPKKKKSETEDDKRRKK) are disordered. PPIase FKBP-type domains follow at residues 51-147 (GDQV…LDFS), 175-260 (PYEV…VHFI), and 291-383 (DSRL…LGFE). TPR repeat units lie at residues 400–433 (ADKI…FNHV), 449–482 (NMLH…KPGH), and 483–516 (VKGL…DKSS). Residues 530 to 546 (KEQEAESKARKQFKGLF) form a calmodulin-binding region. The segment covering 569–586 (EVDETKDNDDDETLEEEG) has biased composition (acidic residues). Residues 569 to 593 (EVDETKDNDDDETLEEEGATTVSTE) are disordered. A helical; Anchor for type IV membrane protein membrane pass occupies residues 609 to 629 (VMLQIGIQLGVVLIGILIFQF).

This sequence belongs to the FKBP-type PPIase family. Interacts with calmodulin (CaM). Interacts with RPM1 and NAC089. Interacts with the elongase complex core members KCR1, PAS2 and CER10. In terms of tissue distribution, expressed ubiquitously.

The protein localises to the endoplasmic reticulum membrane. Its subcellular location is the cytoplasm. It is found in the nucleus. The enzyme catalyses [protein]-peptidylproline (omega=180) = [protein]-peptidylproline (omega=0). PPIases accelerate the folding of proteins. It catalyzes the cis-trans isomerization of proline imidic peptide bonds in oligopeptides. Essential protein regulating cell division, adhesion and elongation throughout the plant development and embryogenesis. Required for the spatial organization of apical meristems. Involved in the hormonal control of cell division and differentiation mediated by cytokinins and auxin. Regulates the function of NAC089 transcription factor by controlling its targeting to the nucleus upon plant cell division. Interacts with enzymes of the fatty acid elongase complex and favors the generation of very-long-chain fatty acids (VLCFAs) required for polar auxin transport and tissue patterning during plant development. This Arabidopsis thaliana (Mouse-ear cress) protein is Peptidyl-prolyl cis-trans isomerase PASTICCINO1 (PAS1).